Reading from the N-terminus, the 34-residue chain is Trypsin inhibitor 2 (34 aa).

Positions serine 1 to glycine 34 form a cross-link, cyclopeptide (Ser-Gly). Positions aspartate 4–glycine 5 form a cross-link, (2-aminosuccinimidyl)acetic acid (Asp-Gly); alternate. A cross-link (isoaspartyl glycine isopeptide (Asp-Gly); alternate) is located at residues aspartate 4 to glycine 5. 3 disulfides stabilise this stretch: cysteine 8-cysteine 25, cysteine 15-cysteine 27, and cysteine 21-cysteine 33.

Post-translationally, a cyclic succinimide probably forms by loss of water between Asp-4 and Gly-5, that can then rehydrate to either the original peptide bond or to a beta-aspartyl isopeptide bond. Three isoforms of MCoTI-II are detected, two with the parent molecular weight, corresponding to the unmodified and proposed isopeptide forms, and one with a molecular weight 18 Da lower, corresponding to a succinimide cross-linked form. This is a cyclic peptide.

The protein localises to the secreted. Inhibits trypsin; probably participates in a plant defense mechanism. The polypeptide is Trypsin inhibitor 2 (Momordica cochinchinensis (Spiny bitter cucumber)).